A 188-amino-acid polypeptide reads, in one-letter code: Elongation factor P (188 aa).

This sequence belongs to the elongation factor P family.

It is found in the cytoplasm. It participates in protein biosynthesis; polypeptide chain elongation. In terms of biological role, involved in peptide bond synthesis. Stimulates efficient translation and peptide-bond synthesis on native or reconstituted 70S ribosomes in vitro. Probably functions indirectly by altering the affinity of the ribosome for aminoacyl-tRNA, thus increasing their reactivity as acceptors for peptidyl transferase. In Rhodopseudomonas palustris (strain BisB5), this protein is Elongation factor P.